A 145-amino-acid polypeptide reads, in one-letter code: uncharacterized protein (145 aa).

The helical transmembrane segment at 16–36 (VLAYLLQLSASLVLPVAIWLI) threads the bilayer.

It is found in the mitochondrion membrane. This is an uncharacterized protein from Arabidopsis thaliana (Mouse-ear cress).